The chain runs to 146 residues: 3-dehydroquinate dehydratase (146 aa).

Tyr-24 (proton acceptor) is an active-site residue. Residues Asn-75, His-81, and Asp-88 each coordinate substrate. His-101 acts as the Proton donor in catalysis. Residues 102–103 and Arg-112 contribute to the substrate site; that span reads LS.

The protein belongs to the type-II 3-dehydroquinase family. Homododecamer.

It catalyses the reaction 3-dehydroquinate = 3-dehydroshikimate + H2O. Its pathway is metabolic intermediate biosynthesis; chorismate biosynthesis; chorismate from D-erythrose 4-phosphate and phosphoenolpyruvate: step 3/7. Catalyzes a trans-dehydration via an enolate intermediate. This Maricaulis maris (strain MCS10) (Caulobacter maris) protein is 3-dehydroquinate dehydratase.